A 337-amino-acid polypeptide reads, in one-letter code: Mitochondrial metalloendopeptidase OMA1 (337 aa).

Residues 1–68 (MFLNKYISNY…QPNPRDKRFQ (68 aa)) lie on the Mitochondrial matrix side of the membrane. The helical transmembrane segment at 69–89 (WIFGALIAGGGVYYFTHLEYV) threads the bilayer. The Mitochondrial intermembrane portion of the chain corresponds to 90–337 (PISNRRRFND…MLQSFKEVHW (248 aa)). His-195 serves as a coordination point for Zn(2+). Glu-196 is an active-site residue. 2 residues coordinate Zn(2+): His-199 and Glu-250. A disulfide bridge links Cys-265 with Cys-321.

It belongs to the peptidase M48 family. Zn(2+) is required as a cofactor.

The protein resides in the mitochondrion inner membrane. With respect to regulation, protease activity is induced in response to various mitochondrial stress. Its function is as follows. Protease that is part of the quality control system in the inner membrane of mitochondria. Cleaves and thereby promotes the turnover of mistranslated or misfolded membrane protein. This Schizosaccharomyces pombe (strain 972 / ATCC 24843) (Fission yeast) protein is Mitochondrial metalloendopeptidase OMA1.